A 237-amino-acid polypeptide reads, in one-letter code: LexA repressor (237 aa).

Polar residues predominate over residues 1 to 12; the sequence is MPVKDSSSNKKN. The interval 1–20 is disordered; that stretch reads MPVKDSSSNKKNQIGKLSER. The segment at residues 41 to 61 is a DNA-binding region (H-T-H motif); sequence IREIGDAAGLQSTSSVAYQLK. The segment covering 67-80 has biased composition (basic and acidic residues); that stretch reads GYLRRDPNKPRAVD. The segment at 67–112 is disordered; the sequence is GYLRRDPNKPRAVDVRALPDPIPSKPGRKPGPKKSSVAISPDPAET. Active-site for autocatalytic cleavage activity residues include serine 161 and lysine 198.

It belongs to the peptidase S24 family. Homodimer.

The enzyme catalyses Hydrolysis of Ala-|-Gly bond in repressor LexA.. In terms of biological role, represses a number of genes involved in the response to DNA damage (SOS response), including recA and lexA. In the presence of single-stranded DNA, RecA interacts with LexA causing an autocatalytic cleavage which disrupts the DNA-binding part of LexA, leading to derepression of the SOS regulon and eventually DNA repair. The protein is LexA repressor of Corynebacterium diphtheriae (strain ATCC 700971 / NCTC 13129 / Biotype gravis).